Consider the following 223-residue polypeptide: Putative 3-methyladenine DNA glycosylase (223 aa).

The protein belongs to the DNA glycosylase MPG family.

This Rhodococcus jostii (strain RHA1) protein is Putative 3-methyladenine DNA glycosylase.